A 128-amino-acid polypeptide reads, in one-letter code: uncharacterized protein (128 aa).

The segment covering 1–28 has biased composition (basic and acidic residues); that stretch reads MDADDFGKKDLENGNESPKKPIFMKDWK. The disordered stretch occupies residues 1–30; the sequence is MDADDFGKKDLENGNESPKKPIFMKDWKNS.

It is found in the cytoplasm. The protein localises to the nucleus. This is an uncharacterized protein from Schizosaccharomyces pombe (strain 972 / ATCC 24843) (Fission yeast).